A 438-amino-acid polypeptide reads, in one-letter code: Gamma-glutamyl phosphate reductase (438 aa).

It belongs to the gamma-glutamyl phosphate reductase family.

The protein resides in the cytoplasm. The catalysed reaction is L-glutamate 5-semialdehyde + phosphate + NADP(+) = L-glutamyl 5-phosphate + NADPH + H(+). It functions in the pathway amino-acid biosynthesis; L-proline biosynthesis; L-glutamate 5-semialdehyde from L-glutamate: step 2/2. In terms of biological role, catalyzes the NADPH-dependent reduction of L-glutamate 5-phosphate into L-glutamate 5-semialdehyde and phosphate. The product spontaneously undergoes cyclization to form 1-pyrroline-5-carboxylate. In Prochlorococcus marinus (strain NATL2A), this protein is Gamma-glutamyl phosphate reductase.